Here is a 612-residue protein sequence, read N- to C-terminus: Vitamin B12 transporter BtuB (612 aa).

Residues 1 to 20 form the signal peptide; the sequence is MIKKSLLCTALSVTAFSGWA. The short motif at 26-33 is the TonB box element; sequence DTLVVTAN. The region spanning 38 to 152 is the TBDR plug domain; it reads PRSAVLAPIT…IGGVVNIITT (115 aa). Cyanocob(III)alamin-binding positions include Ser85, Asn92, and 110–111; that span reads VS. Positions 155–612 constitute a TBDR beta-barrel domain; the sequence is KPGTELTAGV…EYTLSGSYTF (458 aa). Beta stranded transmembrane passes span 158-165, 169-178, and 184-195; these read TELTAGVG, YQNYDVSTQQ, and TRVTLMGDYAYT. Ca(2+)-binding residues include Asp199, Gln211, Asp213, and Asp215. Transmembrane regions (beta stranded) follow at residues 217–227 and 232–248; these read FLSKTLYGALE and DTWSGFVRGYGYDNRTN. Ca(2+)-binding residues include Tyr249, Asp250, and Asp261. The next 14 membrane-spanning stretches (beta stranded) occupy residues 263–277, 279–296, 309–325, 328–337, 353–369, 371–381, 385–400, 403–417, 434–443, 449–458, 473–490, 494–509, 517–529, and 535–550; these read RKLYSQSWDAGLRFN, ELIQSQLVSSYSHSKDYN, TLDEMKQYNVQWSNSIV, HGNVGAGVDW, YDQRNTGLYLTGLQQLG, FTFEGAARSDD, FGRHGTWQTSAGWEFI, YRFIASYGTSYKAPN, QSKQWEGAFE, VNWRVSGYRN, YFNEGKVRIKGVEATANF, PLAHTLSYDMVDSRNA, RRSKQQVKYQLDW, and DWGLTYHYLGTRYDTD. Thr309 lines the cyanocob(III)alamin pocket. Arg517 lines the cyanocob(III)alamin pocket. Tyr551 serves as a coordination point for cyanocob(III)alamin. Transmembrane regions (beta stranded) follow at residues 556 to 570, 583 to 594, and 600 to 612; these read PVKMGGVSLWDLAVS, IANRFDKDYETV, and AGREYTLSGSYTF. The short motif at 595 to 612 is the TonB C-terminal box element; it reads YGYATAGREYTLSGSYTF.

It belongs to the TonB-dependent receptor family. BtuB (TC 1.B.14.3.1) subfamily.

The protein localises to the cell outer membrane. Its function is as follows. Involved in the active translocation of vitamin B12 (cyanocobalamin) across the outer membrane to the periplasmic space. It derives its energy for transport by interacting with the trans-periplasmic membrane protein TonB. The chain is Vitamin B12 transporter BtuB from Citrobacter freundii.